Consider the following 489-residue polypeptide: Ammonium transporter MEP3 (489 aa).

The Extracellular segment spans residues 1–17; it reads MARGDGHLWTETYDSST. Residues 18-38 form a helical membrane-spanning segment; that stretch reads VAFMILGAALVFFMVPGLGFL. The Cytoplasmic segment spans residues 39–48; sequence YSGLARRKSA. A helical membrane pass occupies residues 49–69; the sequence is LALIWVVIMATLVGILQWYFW. Topologically, residues 70–108 are extracellular; sequence GYSLAFSKTATNNKFIGNLDSFGFRNVYGKISDDSTYPE. Residues 109-129 form a helical membrane-spanning segment; it reads LIYAIFQMMFMCVALSIIAGA. At 130–139 the chain is on the cytoplasmic side; sequence TAERGKLFPH. The helical transmembrane segment at 140–160 threads the bilayer; sequence MVFLFVFATLVYCPITYWIWA. Residues 161-173 lie on the Extracellular side of the membrane; that stretch reads PGGWAYQWGVLDW. A helical membrane pass occupies residues 174–194; it reads AGGGNIEILSAVAGFVYSYFL. The Cytoplasmic segment spans residues 195 to 209; it reads GRRKENLLINFRPHN. A helical transmembrane segment spans residues 210–230; that stretch reads VSMVTLGTSILWFGWLLFNAA. Over 231 to 239 the chain is Extracellular; it reads SSLSPNMRS. Residues 240–260 traverse the membrane as a helical segment; it reads VYAFMNTCLSATTGGMTWCLL. The Cytoplasmic segment spans residues 261–267; the sequence is DYRSEKK. Residues 268 to 288 traverse the membrane as a helical segment; it reads WSTVGLCSGIICGLVAATPSS. Position 289 (Gly289) is a topological domain, extracellular. The chain crosses the membrane as a helical span at residues 290–310; it reads CITLYGSLIQGIIAGVVCNFA. Over 311–330 the chain is Cytoplasmic; sequence TKIKYYLKVDDSLDLLAEHG. A helical transmembrane segment spans residues 331 to 351; sequence IAGVVGLIFNALFAADWVIGM. Topologically, residues 352 to 372 are extracellular; the sequence is DGTTKHKGGWLTHNWKQMYIQ. Residues 373–393 traverse the membrane as a helical segment; that stretch reads IAYIGASAGYCAVVTAIICFV. Residues 394–489 lie on the Cytoplasmic side of the membrane; that stretch reads LGKIPGVHLR…NPKLHHAKEA (96 aa). Positions 448–481 are enriched in polar residues; it reads GANSASETNPTEDSQNSSLSSATVSGQNEKSNNP. Residues 448–489 form a disordered region; the sequence is GANSASETNPTEDSQNSSLSSATVSGQNEKSNNPKLHHAKEA.

The protein belongs to the ammonia transporter channel (TC 1.A.11.2) family.

The protein localises to the membrane. Functionally, transporter for ammonium (both charged and uncharged NH3 and NH4) to use as a nitrogen source. The affinity of MEP2 is about twenty times higher than that of MEP1. MEP3 has the lowest affinity. This Saccharomyces cerevisiae (strain ATCC 204508 / S288c) (Baker's yeast) protein is Ammonium transporter MEP3 (MEP3).